Reading from the N-terminus, the 23-residue chain is Paralytic peptide 2 (23 aa).

A disulfide bridge connects residues Cys-7 and Cys-19.

The protein belongs to the GBP/PSP1/paralytic peptide family. As to expression, hemolymph.

Functionally, causes rapid, rigid paralysis when injected into Lepidopteran larvae. The physiological role may be to reduce hemolymph loss following injury and promote wound healing. This is Paralytic peptide 2 from Manduca sexta (Tobacco hawkmoth).